The sequence spans 118 residues: Putative membrane protein insertion efficiency factor (118 aa).

The interval 76–118 (WDPVPQRRPRRRDAAAADAAMSAPHACKGSPHAVVGDTNDGST) is disordered. Low complexity predominate over residues 91–101 (AADAAMSAPHA).

Belongs to the UPF0161 family.

The protein localises to the cell membrane. Functionally, could be involved in insertion of integral membrane proteins into the membrane. This is Putative membrane protein insertion efficiency factor from Nocardia farcinica (strain IFM 10152).